The chain runs to 48 residues: MRLFLIFTFIVASLASVYGCIPAANPCRGNAKCCGNYVCKNGRCLPRS.

An N-terminal signal peptide occupies residues 1–19 (MRLFLIFTFIVASLASVYG). Intrachain disulfides connect Cys-20–Cys-34, Cys-27–Cys-39, and Cys-33–Cys-44.

Belongs to the venom Ptu1-like knottin family. As to expression, expressed by the venom gland.

It is found in the secreted. Binds reversibly and blocks P/Q-type voltage-gated calcium channels (Cav). This is U-reduvitoxin-Pr5a from Platymeris rhadamanthus (Red spot assassin bug).